The chain runs to 326 residues: Archaeal actin homolog (326 aa).

ATP contacts are provided by residues 10 to 14 (YGDTK), Ser-179, Gln-231, 285 to 288 (GGAN), and Gln-311.

The protein belongs to the thermophilic archaeal actin family.

Its function is as follows. Polymerizes into bundles of filaments. Polymerization requires NTP and is optimal with ATP, but GTP, UTP, CTP, and even the deoxy form of NTP can also support the polymerization reaction. The chain is Archaeal actin homolog from Thermoplasma volcanium (strain ATCC 51530 / DSM 4299 / JCM 9571 / NBRC 15438 / GSS1).